The sequence spans 334 residues: tRNA dimethylallyltransferase (334 aa).

23–30 (GPTGAGKT) contacts ATP. 25-30 (TGAGKT) provides a ligand contact to substrate. 2 interaction with substrate tRNA regions span residues 53–56 (DSAL) and 177–181 (QRVQR).

Belongs to the IPP transferase family. As to quaternary structure, monomer. Mg(2+) serves as cofactor.

It catalyses the reaction adenosine(37) in tRNA + dimethylallyl diphosphate = N(6)-dimethylallyladenosine(37) in tRNA + diphosphate. Its function is as follows. Catalyzes the transfer of a dimethylallyl group onto the adenine at position 37 in tRNAs that read codons beginning with uridine, leading to the formation of N6-(dimethylallyl)adenosine (i(6)A). The polypeptide is tRNA dimethylallyltransferase (Polynucleobacter necessarius subsp. necessarius (strain STIR1)).